A 201-amino-acid polypeptide reads, in one-letter code: 3-isopropylmalate dehydratase small subunit (201 aa).

This sequence belongs to the LeuD family. LeuD type 1 subfamily. As to quaternary structure, heterodimer of LeuC and LeuD.

The enzyme catalyses (2R,3S)-3-isopropylmalate = (2S)-2-isopropylmalate. It functions in the pathway amino-acid biosynthesis; L-leucine biosynthesis; L-leucine from 3-methyl-2-oxobutanoate: step 2/4. Catalyzes the isomerization between 2-isopropylmalate and 3-isopropylmalate, via the formation of 2-isopropylmaleate. The protein is 3-isopropylmalate dehydratase small subunit of Escherichia coli O45:K1 (strain S88 / ExPEC).